The chain runs to 215 residues: 3-demethoxyubiquinol 3-hydroxylase (215 aa).

Fe cation-binding residues include Glu-64, Glu-94, His-97, Glu-146, Glu-178, and His-181.

Belongs to the COQ7 family. It depends on Fe cation as a cofactor.

The protein resides in the cell membrane. The catalysed reaction is a 5-methoxy-2-methyl-3-(all-trans-polyprenyl)benzene-1,4-diol + AH2 + O2 = a 3-demethylubiquinol + A + H2O. Its pathway is cofactor biosynthesis; ubiquinone biosynthesis. Its function is as follows. Catalyzes the hydroxylation of 2-nonaprenyl-3-methyl-6-methoxy-1,4-benzoquinol during ubiquinone biosynthesis. The protein is 3-demethoxyubiquinol 3-hydroxylase of Stutzerimonas stutzeri (strain A1501) (Pseudomonas stutzeri).